Here is a 395-residue protein sequence, read N- to C-terminus: uncharacterized protein (395 aa).

Residues 288–318 adopt a coiled-coil conformation; it reads VAKGKEIDNAEIEKTIKEYENIEEGIEDIVK.

This is an uncharacterized protein from Ostreid herpesvirus 1 (isolate France) (OsHV-1).